We begin with the raw amino-acid sequence, 187 residues long: Elongation factor P (187 aa).

The protein belongs to the elongation factor P family.

The protein localises to the cytoplasm. Its pathway is protein biosynthesis; polypeptide chain elongation. In terms of biological role, involved in peptide bond synthesis. Stimulates efficient translation and peptide-bond synthesis on native or reconstituted 70S ribosomes in vitro. Probably functions indirectly by altering the affinity of the ribosome for aminoacyl-tRNA, thus increasing their reactivity as acceptors for peptidyl transferase. The polypeptide is Elongation factor P (Desulforapulum autotrophicum (strain ATCC 43914 / DSM 3382 / VKM B-1955 / HRM2) (Desulfobacterium autotrophicum)).